The chain runs to 785 residues: Altered inheritance of mitochondria protein 3-2 (785 aa).

Disordered regions lie at residues 33–122 (TGYQ…QPYM), 142–406 (QQVA…SENL), and 418–785 (NVDV…RLHK). The span at 91–102 (GSSGNSANGSSA) shows a compositional bias: low complexity. Polar residues-rich tracts occupy residues 103 to 122 (TIPT…QPYM) and 143 to 199 (QVAT…QLNI). Basic and acidic residues predominate over residues 249–260 (KPYDWEEQKTTK). Polar residues-rich tracts occupy residues 283 to 310 (SRQG…TTTG), 350 to 366 (ATNN…QNTK), 375 to 388 (TNKS…SNVM), 395 to 405 (QMNTKANSSEN), and 455 to 465 (SSISRDNYNSI). The span at 478–497 (NTGEREGAQELKADIAERSQ) shows a compositional bias: basic and acidic residues. Residues 527–556 (AQTSSDIPQKSSLVTDESNISVPNKSQQPM) show a composition bias toward polar residues. Basic and acidic residues-rich tracts occupy residues 587–613 (KSLE…EQLK) and 624–637 (KNMK…DNKN). The segment covering 659–671 (SLTSEGNHMNLNT) has biased composition (polar residues). 2 stretches are compositionally biased toward basic and acidic residues: residues 672–686 (EKGK…DESK) and 700–710 (FKREELSKEVV).

It belongs to the AIM3 family.

It is found in the membrane raft. The chain is Altered inheritance of mitochondria protein 3-2 (AIM3-2) from Candida glabrata (strain ATCC 2001 / BCRC 20586 / JCM 3761 / NBRC 0622 / NRRL Y-65 / CBS 138) (Yeast).